Here is a 427-residue protein sequence, read N- to C-terminus: Enolase (427 aa).

Residue glutamine 163 participates in (2R)-2-phosphoglycerate binding. Catalysis depends on glutamate 205, which acts as the Proton donor. Residues aspartate 242, glutamate 285, and aspartate 312 each coordinate Mg(2+). Residues lysine 337, arginine 366, serine 367, and lysine 388 each coordinate (2R)-2-phosphoglycerate. Catalysis depends on lysine 337, which acts as the Proton acceptor.

It belongs to the enolase family. Mg(2+) is required as a cofactor.

It is found in the cytoplasm. It localises to the secreted. The protein resides in the cell surface. It carries out the reaction (2R)-2-phosphoglycerate = phosphoenolpyruvate + H2O. Its pathway is carbohydrate degradation; glycolysis; pyruvate from D-glyceraldehyde 3-phosphate: step 4/5. In terms of biological role, catalyzes the reversible conversion of 2-phosphoglycerate (2-PG) into phosphoenolpyruvate (PEP). It is essential for the degradation of carbohydrates via glycolysis. The protein is Enolase of Leptothrix cholodnii (strain ATCC 51168 / LMG 8142 / SP-6) (Leptothrix discophora (strain SP-6)).